Here is a 749-residue protein sequence, read N- to C-terminus: 1,4-alpha-glucan branching enzyme GlgB (749 aa).

Aspartate 427 functions as the Nucleophile in the catalytic mechanism. Catalysis depends on glutamate 480, which acts as the Proton donor.

It belongs to the glycosyl hydrolase 13 family. GlgB subfamily. Monomer.

It catalyses the reaction Transfers a segment of a (1-&gt;4)-alpha-D-glucan chain to a primary hydroxy group in a similar glucan chain.. Its pathway is glycan biosynthesis; glycogen biosynthesis. Catalyzes the formation of the alpha-1,6-glucosidic linkages in glycogen by scission of a 1,4-alpha-linked oligosaccharide from growing alpha-1,4-glucan chains and the subsequent attachment of the oligosaccharide to the alpha-1,6 position. In Thermobifida fusca (strain YX), this protein is 1,4-alpha-glucan branching enzyme GlgB.